Here is a 191-residue protein sequence, read N- to C-terminus: Abscisic acid receptor PYR1 (191 aa).

An START-like region spans residues 23 to 176; sequence YQLDPGSCSS…NLQKLATVAE (154 aa). An abscisate-binding site is contributed by Lys-59. A Phosphothreonine; by CARK1 modification is found at Thr-78. The short motif at 85 to 89 is the Gate loop element; the sequence is SGLPA. Abscisate-binding positions include 89–94, 116–122, and Glu-141; these read ANTSTE and RLTNYKS. Residues 115–117 carry the Latch loop motif; that stretch reads HRL.

Belongs to the PYR/PYL/RCAR abscisic acid intracellular receptor family. In terms of assembly, homodimer. Binds ABA on one subunit only. Interacts with HAB1, AHG3, ABI1 and ABI2 when complexed to ABA, and possibly with other PP2Cs. Binds to CARs protein in an ABA-independent manner, both at the plasma membrane and in the nucleus. Interacts directly with CAR1 and CAR4. Interacts with CARK1 in the cytosol. Interacts with AIP1 in an abscisic acid-dependent manner. Interacts with FREE1 (via N-terminus). Interacts with the E3 ubiquitin-protein ligase RSL1 at the plasma membrane. In terms of processing, ubiquitynated and degraded by the proteasome upon binding to the E3 ubiquitin-protein ligase RSL1 at the plasma membrane. Post-translationally, phosphorylated by CARK1 especially in response to abscisic acid (ABA); this phosphorylation promotes its stability and inhibitory ability to ABI1.

It is found in the cytoplasm. The protein resides in the cytosol. It localises to the nucleus. Its subcellular location is the cell membrane. The protein localises to the vacuole. Its function is as follows. Receptor for abscisic acid (ABA) required for ABA-mediated responses such as stomatal closure and germination inhibition. Inhibits the activity of group-A protein phosphatases type 2C (PP2Cs) when activated by ABA. Can be activated by both (-)-ABA and (+)-ABA. Promotes drought tolerance. This chain is Abscisic acid receptor PYR1, found in Arabidopsis thaliana (Mouse-ear cress).